The chain runs to 138 residues: Large ribosomal subunit protein bL17 (138 aa).

A disordered region spans residues 118 to 138 (RDEDAKGKDSGPSQDGAAEAA).

Belongs to the bacterial ribosomal protein bL17 family. As to quaternary structure, part of the 50S ribosomal subunit. Contacts protein L32.

The chain is Large ribosomal subunit protein bL17 from Rhodopseudomonas palustris (strain HaA2).